A 70-amino-acid chain; its full sequence is Toxin Boma6d (70 aa).

Residues 2–68 (RDAYIAQNYN…VPIKVEGKCH (67 aa)) form the LCN-type CS-alpha/beta domain. Disulfide bonds link C12–C67, C16–C40, C22–C50, and C26–C52.

Belongs to the long (4 C-C) scorpion toxin superfamily. Sodium channel inhibitor family. Alpha subfamily. As to expression, expressed by the venom gland.

It localises to the secreted. Functionally, alpha toxins bind voltage-independently at site-3 of sodium channels (Nav) and inhibit the inactivation of the activated channels, thereby blocking neuronal transmission. The polypeptide is Toxin Boma6d (Buthus occitanus mardochei (Moroccan scorpion)).